Reading from the N-terminus, the 1304-residue chain is Zinc finger CCCH domain-containing protein 4 (1304 aa).

Positions 1 to 33 are enriched in pro residues; it reads MEAVPGTPPPPPSESPPPPSPPPPSTPSPPPCS. A disordered region spans residues 1-387; it reads MEAVPGTPPP…SDHDKPHQQS (387 aa). Over residues 53 to 73 the composition is skewed to acidic residues; that stretch reads DREDGELEEGELEDDGAEEVQ. Residues 80-99 are compositionally biased toward basic and acidic residues; the sequence is ERSRKEKGEKHHSDSEEEKS. Phosphoserine is present on residues Ser-92 and Ser-94. Positions 94 to 128 form a coiled coil; it reads SEEEKSHRRLKRKRKKEREKEKRRSKKRRKSKHKR. The span at 100–130 shows a compositional bias: basic residues; sequence HRRLKRKRKKEREKEKRRSKKRRKSKHKRHA. The span at 135–144 shows a compositional bias: acidic residues; sequence DFSDFSDDSD. Position 155 is a phosphotyrosine (Tyr-155). Residues 165-174 show a composition bias toward polar residues; that stretch reads SHQQYSSSHN. The span at 194–218 shows a compositional bias: acidic residues; it reads EDYENEQYGEYEGDEEEDMGKEDYD. A compositionally biased stretch (basic and acidic residues) spans 219–235; that stretch reads DFTKELNQYRRAKEGSS. Basic residues predominate over residues 238–251; the sequence is RGSRGRGRGYRGRG. Residues 252–264 show a composition bias toward gly residues; sequence SRGGSRGRGMGRG. Over residues 277–303 the composition is skewed to acidic residues; sequence PEDEEDLYEEEIEYGESEEPMGDDDYD. Basic and acidic residues predominate over residues 304–320; that stretch reads DYSKELNQYRRSKDSRG. Over residues 322 to 346 the composition is skewed to basic residues; that stretch reads GLSRGRGRGSRGGRGKGMGRGRGRG. A compositionally biased stretch (acidic residues) spans 357-368; sequence NDDEDFYDDDMG. Residues 376–387 are compositionally biased toward basic and acidic residues; it reads RRSDHDKPHQQS. 3 consecutive C3H1-type zinc fingers follow at residues 389–416, 418–445, and 446–469; these read KKGKVICKYFVEGRCTWGDHCNFSHDIE, PKKRELCKFYITGFCARAENCPYMHGDF, and PCKLYHTTGNCINGDDCMFSHDPL. Residues 485–495 show a composition bias toward acidic residues; it reads AEAGAEDEKEV. The segment at 485–567 is disordered; the sequence is AEAGAEDEKE…LPTHEPLSPQ (83 aa). Composition is skewed to pro residues over residues 506-529 and 538-556; these read LPKPPPGVGLLPTPPRPPGPPAPT and GGPPPPPPPPPPPPGPPQM. An Asymmetric dimethylarginine modification is found at Arg-599. 3 disordered regions span residues 601–691, 719–970, and 994–1304; these read PGPG…DSPH, PGLV…SHIK, and LPIP…PFCQ. Residues 603–622 show a composition bias toward pro residues; the sequence is PGGPSGPMGPGPNMGPPGPM. The segment covering 628–660 has biased composition (basic and acidic residues); the sequence is PDMHPDMHPDMHPDMHPDMHPDMHPDMHPDMHP. A compositionally biased stretch (pro residues) spans 669–683; the sequence is NPGPPMGPGGPPMMP. A coiled-coil region spans residues 778–809; sequence ALYLRIQQKQQEEERARRLAESSKQDRENEEG. Basic and acidic residues predominate over residues 787 to 804; the sequence is QQEEERARRLAESSKQDR. Ser-816 and Ser-817 each carry phosphoserine. The segment covering 824 to 852 has biased composition (polar residues); the sequence is SSVTSILKTLRQQTSSRPQASVGEPSSSG. Positions 869-884 are enriched in basic and acidic residues; it reads SDPRLSRDPRLSRHAE. Phosphoserine occurs at positions 913, 916, and 917. Low complexity predominate over residues 913-929; that stretch reads SLHSSPAGPSSSKGQPP. The span at 994 to 1005 shows a compositional bias: pro residues; sequence LPIPKQDVPPVP. Polar residues-rich tracts occupy residues 1028-1044 and 1058-1067; these read NTRQRPGSTDPSTSGSN and VNVNTPGQSE. Positions 1068–1085 are enriched in basic and acidic residues; that stretch reads KPSDPRVRKTPTDPRLQK. Composition is skewed to low complexity over residues 1098-1129 and 1137-1146; these read PCPTEASPPAASPSGDSSPPATAPYDPRVLAA and SSGQSSVLSG. A phosphoserine mark is found at Ser-1104, Ser-1109, Ser-1111, and Ser-1115. Thr-1119 carries the post-translational modification Phosphothreonine. Over residues 1204 to 1220 the composition is skewed to polar residues; sequence KASTDGATATDRYNSYN. The span at 1225-1235 shows a compositional bias: low complexity; sequence KATAAPTAASS. Phosphoserine is present on residues Ser-1270 and Ser-1276.

Belongs to the suppressor of sable family. As to quaternary structure, interacts with WDR82.

The protein resides in the chromosome. Its function is as follows. RNA-binding protein that suppresses transcription of long non-coding RNAs (lncRNAs). LncRNAs are defined as transcripts more than 200 nucleotides that are not translated into protein. Together with WDR82, part of a transcription termination checkpoint that promotes transcription termination of lncRNAs and their subsequent degradation by the exosome. The transcription termination checkpoint is activated by the inefficiently spliced first exon of lncRNAs. In Mus musculus (Mouse), this protein is Zinc finger CCCH domain-containing protein 4.